The following is a 2492-amino-acid chain: Polyketide synthase 19 (2492 aa).

Positions 12 to 463 (REPIAIVGTS…GTNAHAIVES (452 aa)) constitute a Ketosynthase family 3 (KS3) domain. Residues C202, H341, and H383 each act as for beta-ketoacyl synthase activity in the active site. A malonyl-CoA:ACP transacylase (MAT) domain region spans residues 571–866 (VFTGQGAQWA…LEVGPHPALK (296 aa)). Positions 967–1110 (HELLGRSVSH…GRIRLWLEQP (144 aa)) are N-terminal hotdog fold. Residues 967–1270 (HELLGRSVSH…GVQMTAIGKP (304 aa)) form a dehydratase (DH) domain region. Residues 967 to 1273 (HELLGRSVSH…MTAIGKPPDR (307 aa)) enclose the PKS/mFAS DH domain. H1001 (proton acceptor; for dehydratase activity) is an active-site residue. The segment at 1125 to 1273 (MSELNMAQVY…MTAIGKPPDR (149 aa)) is C-terminal hotdog fold. The active-site Proton donor; for dehydratase activity is the D1183. The segment at 1431-1604 (LGAIVKQLGH…KTTGFSGVDI (174 aa)) is C-methyltransferase (CMeT) domain. Positions 2118 to 2293 (SYLLFGMTGD…AGSIVHISVL (176 aa)) are ketoreductase (KR) domain. The Carrier domain occupies 2404–2479 (PILEKRFAQA…RVCDDVLVDW (76 aa)). S2438 bears the O-(pantetheine 4'-phosphoryl)serine mark.

Its function is as follows. Highly reducing polyketide synthase; part of the gene cluster that mediates the biosynthesis of fujikurins A-D, secondary metabolites playing a role during rice infection. The polyketide synthase PKS19 acts with the trans-enoyl reductase FFUJ_12240 and the polyketide transferase FFUJ_12241 to produce fujikurins, however, the biosynthesis pathway has not been identified yet. This chain is Polyketide synthase 19, found in Gibberella fujikuroi (strain CBS 195.34 / IMI 58289 / NRRL A-6831) (Bakanae and foot rot disease fungus).